Consider the following 715-residue polypeptide: 1,4-alpha-glucan branching enzyme GlgB (715 aa).

Residue Asp-396 is the Nucleophile of the active site. Glu-449 serves as the catalytic Proton donor.

This sequence belongs to the glycosyl hydrolase 13 family. GlgB subfamily. Monomer.

The catalysed reaction is Transfers a segment of a (1-&gt;4)-alpha-D-glucan chain to a primary hydroxy group in a similar glucan chain.. Its pathway is glycan biosynthesis; glycogen biosynthesis. In terms of biological role, catalyzes the formation of the alpha-1,6-glucosidic linkages in glycogen by scission of a 1,4-alpha-linked oligosaccharide from growing alpha-1,4-glucan chains and the subsequent attachment of the oligosaccharide to the alpha-1,6 position. This is 1,4-alpha-glucan branching enzyme GlgB from Vibrio vulnificus (strain YJ016).